The primary structure comprises 328 residues: Tetraacyldisaccharide 4'-kinase (328 aa).

Position 55–62 (threonine 55–threonine 62) interacts with ATP.

This sequence belongs to the LpxK family.

It carries out the reaction a lipid A disaccharide + ATP = a lipid IVA + ADP + H(+). Its pathway is glycolipid biosynthesis; lipid IV(A) biosynthesis; lipid IV(A) from (3R)-3-hydroxytetradecanoyl-[acyl-carrier-protein] and UDP-N-acetyl-alpha-D-glucosamine: step 6/6. Its function is as follows. Transfers the gamma-phosphate of ATP to the 4'-position of a tetraacyldisaccharide 1-phosphate intermediate (termed DS-1-P) to form tetraacyldisaccharide 1,4'-bis-phosphate (lipid IVA). The protein is Tetraacyldisaccharide 4'-kinase of Escherichia coli (strain K12 / MC4100 / BW2952).